A 227-amino-acid chain; its full sequence is Cytochrome c oxidase subunit 2 (227 aa).

The Mitochondrial intermembrane portion of the chain corresponds to 1 to 14 (MTHPLQLGFQDATS). Residues 15 to 45 (PIMEELLHFHDHTLMIVFLISSLVLYIITLM) traverse the membrane as a helical segment. The Mitochondrial matrix portion of the chain corresponds to 46–59 (LTTKLTHTSTMDAQ). The helical transmembrane segment at 60-87 (EVETVWTILPAIILILIALPSLRILYMM) threads the bilayer. The Mitochondrial intermembrane segment spans residues 88 to 227 (DEINNPLLTV…YFEDWSVSMT (140 aa)). Cu cation is bound by residues H161, C196, E198, C200, H204, and M207. Residue E198 coordinates Mg(2+). Y218 carries the phosphotyrosine modification.

Belongs to the cytochrome c oxidase subunit 2 family. As to quaternary structure, component of the cytochrome c oxidase (complex IV, CIV), a multisubunit enzyme composed of 14 subunits. The complex is composed of a catalytic core of 3 subunits MT-CO1, MT-CO2 and MT-CO3, encoded in the mitochondrial DNA, and 11 supernumerary subunits COX4I, COX5A, COX5B, COX6A, COX6B, COX6C, COX7A, COX7B, COX7C, COX8 and NDUFA4, which are encoded in the nuclear genome. The complex exists as a monomer or a dimer and forms supercomplexes (SCs) in the inner mitochondrial membrane with NADH-ubiquinone oxidoreductase (complex I, CI) and ubiquinol-cytochrome c oxidoreductase (cytochrome b-c1 complex, complex III, CIII), resulting in different assemblies (supercomplex SCI(1)III(2)IV(1) and megacomplex MCI(2)III(2)IV(2)). Found in a complex with TMEM177, COA6, COX18, COX20, SCO1 and SCO2. Interacts with TMEM177 in a COX20-dependent manner. Interacts with COX20. Interacts with COX16. The cofactor is Cu cation.

It is found in the mitochondrion inner membrane. It carries out the reaction 4 Fe(II)-[cytochrome c] + O2 + 8 H(+)(in) = 4 Fe(III)-[cytochrome c] + 2 H2O + 4 H(+)(out). Its function is as follows. Component of the cytochrome c oxidase, the last enzyme in the mitochondrial electron transport chain which drives oxidative phosphorylation. The respiratory chain contains 3 multisubunit complexes succinate dehydrogenase (complex II, CII), ubiquinol-cytochrome c oxidoreductase (cytochrome b-c1 complex, complex III, CIII) and cytochrome c oxidase (complex IV, CIV), that cooperate to transfer electrons derived from NADH and succinate to molecular oxygen, creating an electrochemical gradient over the inner membrane that drives transmembrane transport and the ATP synthase. Cytochrome c oxidase is the component of the respiratory chain that catalyzes the reduction of oxygen to water. Electrons originating from reduced cytochrome c in the intermembrane space (IMS) are transferred via the dinuclear copper A center (CU(A)) of subunit 2 and heme A of subunit 1 to the active site in subunit 1, a binuclear center (BNC) formed by heme A3 and copper B (CU(B)). The BNC reduces molecular oxygen to 2 water molecules using 4 electrons from cytochrome c in the IMS and 4 protons from the mitochondrial matrix. The polypeptide is Cytochrome c oxidase subunit 2 (MT-CO2) (Carlito syrichta (Philippine tarsier)).